A 128-amino-acid polypeptide reads, in one-letter code: UPF0102 protein Rfer_3873 (128 aa).

A compositionally biased stretch (polar residues) spans 1-15 (MAIPQIKTQVGTSKQ). Residues 1-20 (MAIPQIKTQVGTSKQAGDAA) form a disordered region.

This sequence belongs to the UPF0102 family.

In Albidiferax ferrireducens (strain ATCC BAA-621 / DSM 15236 / T118) (Rhodoferax ferrireducens), this protein is UPF0102 protein Rfer_3873.